A 442-amino-acid polypeptide reads, in one-letter code: Cysteine proteinase 4 (442 aa).

Residues 1-17 form the signal peptide; it reads MRVLSFLCLLLVSYASA. Positions 18–111 are cleaved as a propeptide — activation peptide; sequence KQQFSELQYR…TEEEKIFSTP (94 aa). 2 cysteine pairs are disulfide-bonded: Cys132-Cys178 and Cys169-Cys212. Cys135 is an active-site residue. Residues Asn228 and Asn254 are each glycosylated (N-linked (GlcNAc...) asparagine). Cys270 and Cys428 are oxidised to a cystine. His277 is an active-site residue. The interval 286–396 is disordered; that stretch reads SGSSSSSGSS…SGSGSGAVEA (111 aa). Residues 287-376 show a composition bias toward low complexity; the sequence is GSSSSSGSSS…SASGQASASG (90 aa). The segment covering 377–391 has biased composition (gly residues); sequence SGSGSGSGSGSGSGS. Asn406 is an active-site residue.

This sequence belongs to the peptidase C1 family. Post-translationally, glycosylated; contains GlcNAc-alpha-1-P-Ser residues and fucose.

The protein resides in the lysosome. The protein is Cysteine proteinase 4 (cprD) of Dictyostelium discoideum (Social amoeba).